The primary structure comprises 182 residues: Isopentenyl-diphosphate Delta-isomerase (182 aa).

Residues His-25 and His-32 each coordinate Mn(2+). Residues 30-164 (LLHLAFSSWL…PWAFSPWMVM (135 aa)) enclose the Nudix hydrolase domain. The active site involves Cys-67. Mn(2+) is bound at residue His-69. Glu-87 contributes to the Mg(2+) binding site. The Mn(2+) site is built by Glu-114 and Glu-116. The active site involves Glu-116.

It belongs to the IPP isomerase type 1 family. In terms of assembly, homodimer. Mg(2+) serves as cofactor. It depends on Mn(2+) as a cofactor.

It is found in the cytoplasm. It carries out the reaction isopentenyl diphosphate = dimethylallyl diphosphate. It functions in the pathway isoprenoid biosynthesis; dimethylallyl diphosphate biosynthesis; dimethylallyl diphosphate from isopentenyl diphosphate: step 1/1. Its function is as follows. Catalyzes the 1,3-allylic rearrangement of the homoallylic substrate isopentenyl (IPP) to its highly electrophilic allylic isomer, dimethylallyl diphosphate (DMAPP). The chain is Isopentenyl-diphosphate Delta-isomerase from Escherichia coli (strain ATCC 8739 / DSM 1576 / NBRC 3972 / NCIMB 8545 / WDCM 00012 / Crooks).